The following is a 207-amino-acid chain: Arginine exporter protein ArgO (207 aa).

The next 6 helical transmembrane spans lie at 1–21, 42–62, 67–87, 111–131, 150–170, and 185–205; these read MLST…PLGP, LCAI…SALL, LLLQ…GWGA, VVAI…DTIV, FGAA…AAWF, and GFIC…GLLI.

The protein belongs to the LysE/ArgO transporter (TC 2.A.75) family.

Its subcellular location is the cell inner membrane. It carries out the reaction L-arginine(in) = L-arginine(out). Involved in the export of arginine. Important to control the intracellular level of arginine and the correct balance between arginine and lysine. The chain is Arginine exporter protein ArgO from Photorhabdus laumondii subsp. laumondii (strain DSM 15139 / CIP 105565 / TT01) (Photorhabdus luminescens subsp. laumondii).